The following is a 926-amino-acid chain: Probable Xaa-Pro aminopeptidase PTT_10145 (926 aa).

Aspartate 274, aspartate 285, glutamate 435, and glutamate 476 together coordinate Mn(2+). Disordered stretches follow at residues 505-538 (GNPG…PGIS), 595-615 (KRDS…LSPV), 668-696 (SSST…EEKH), 711-741 (IGQS…KAAT), and 865-926 (MPVL…FLTR). A compositionally biased stretch (polar residues) spans 506–515 (NPGTTEILNP). Basic and acidic residues-rich tracts occupy residues 685–696 (SRQKSHTVEEKH) and 719–730 (GPEERRRKAQSD). The segment covering 887–897 (NNATNKRSMID) has biased composition (polar residues). Residues 900-915 (PAERRTRPERPERPAR) are compositionally biased toward basic and acidic residues.

Belongs to the peptidase M24B family. Requires Mn(2+) as cofactor.

The catalysed reaction is Release of any N-terminal amino acid, including proline, that is linked to proline, even from a dipeptide or tripeptide.. Catalyzes the removal of a penultimate prolyl residue from the N-termini of peptides. In Pyrenophora teres f. teres (strain 0-1) (Barley net blotch fungus), this protein is Probable Xaa-Pro aminopeptidase PTT_10145.